The sequence spans 224 residues: MKIVVPIMPRNLEEVEAIDVERLAEADIVEWRADYLLKDDILRVAPAIFEKCSGKEVVFTIRTTREGGHLDLDDQEYVNVIKEVATLYQPDYIDFEYYSYKSVFEQMLEFPNLVLSYHNFEETPSNYMEIMSELTSLSPAVVKMAVMAKTEQDVLDVMNYTRGFKSLNTEQIFATIAMGELGKLTRIAGVITGSCWTFASLDETSAPGQMSLSNTRKFLEILEN.

3-dehydroquinate is bound by residues 30–32 (EWR) and Arg62. His118 (proton donor/acceptor) is an active-site residue. Lys143 (schiff-base intermediate with substrate) is an active-site residue. 3-dehydroquinate contacts are provided by Arg186, Ser205, and Gln209.

It belongs to the type-I 3-dehydroquinase family. In terms of assembly, homodimer.

The catalysed reaction is 3-dehydroquinate = 3-dehydroshikimate + H2O. The protein operates within metabolic intermediate biosynthesis; chorismate biosynthesis; chorismate from D-erythrose 4-phosphate and phosphoenolpyruvate: step 3/7. Involved in the third step of the chorismate pathway, which leads to the biosynthesis of aromatic amino acids. Catalyzes the cis-dehydration of 3-dehydroquinate (DHQ) and introduces the first double bond of the aromatic ring to yield 3-dehydroshikimate. The protein is 3-dehydroquinate dehydratase of Streptococcus suis (strain 98HAH33).